The sequence spans 1343 residues: DNA-directed RNA polymerase subunit beta (1343 aa).

Belongs to the RNA polymerase beta chain family. In terms of assembly, the RNAP catalytic core consists of 2 alpha, 1 beta, 1 beta' and 1 omega subunit. When a sigma factor is associated with the core the holoenzyme is formed, which can initiate transcription.

The enzyme catalyses RNA(n) + a ribonucleoside 5'-triphosphate = RNA(n+1) + diphosphate. In terms of biological role, DNA-dependent RNA polymerase catalyzes the transcription of DNA into RNA using the four ribonucleoside triphosphates as substrates. In Haemophilus influenzae (strain 86-028NP), this protein is DNA-directed RNA polymerase subunit beta.